The chain runs to 257 residues: UPF0246 protein Ping_3037 (257 aa).

It belongs to the UPF0246 family.

The chain is UPF0246 protein Ping_3037 from Psychromonas ingrahamii (strain DSM 17664 / CCUG 51855 / 37).